The chain runs to 505 residues: Prenylcysteine oxidase 1 (505 aa).

Positions 1–27 are cleaved as a signal peptide; that stretch reads MGRVVAELVSSLLGLWLLLCSCGCPEG. N-linked (GlcNAc...) asparagine glycosylation is found at N196, N323, and N353.

It belongs to the prenylcysteine oxidase family. FAD is required as a cofactor.

It localises to the lysosome. It carries out the reaction an S-polyprenyl-L-cysteine + O2 + H2O = a polyprenal + L-cysteine + H2O2. The enzyme catalyses S-(2E,6E)-farnesyl-L-cysteine + O2 + H2O = (2E,6E)-farnesal + L-cysteine + H2O2. It catalyses the reaction [(2E,6E,10E)-geranylgeranyl]-L-cysteine + O2 + H2O = (2E,6E,10E)-geranylgeranial + L-cysteine + H2O2. Prenylcysteine oxidase that cleaves the thioether bond of prenyl-L-cysteines, such as farnesylcysteine and geranylgeranylcysteine. Only active against free prenylcysteines and not prenylcysteine residues within prenylated proteins or peptides. Involved in the final step in the degradation of prenylated proteins, by degrading prenylcysteines after the protein has been degraded. This chain is Prenylcysteine oxidase 1, found in Pongo abelii (Sumatran orangutan).